Here is a 67-residue protein sequence, read N- to C-terminus: MIIPVRCFTCGKIVGNKWEAYLGLLQAEYTEGDALDALGLKRYCCRRMLLAHVDLIEKLLNYAPLEK.

4 residues coordinate Zn(2+): Cys-7, Cys-10, Cys-44, and Cys-45.

The protein belongs to the archaeal Rpo10/eukaryotic RPB10 RNA polymerase subunit family. In terms of assembly, component of the RNA polymerase I (Pol I), RNA polymerase II (Pol II) and RNA polymerase III (Pol III) complexes consisting of at least 13, 12 and 17 subunits, respectively. Pol I complex consists of a ten-subunit catalytic core composed of POLR1A/RPA1, POLR1B/RPA2, POLR1C/RPAC1, POLR1D/RPAC2, POLR1H/RPA12, POLR2E/RPABC1, POLR2F/RPABC2, POLR2H/RPABC3, POLR2K/RPABC4 and POLR2L/RPABC5; a mobile stalk subunit POLR1F/RPA43 protruding from the core and additional subunits homologous to general transcription factors POLR1E/RPA49 and POLR1G/RPA34. Part of Pol I pre-initiation complex (PIC), in which Pol I core assembles with RRN3 and promoter-bound UTBF and SL1/TIF-IB complex. Pol II complex contains a ten-subunit catalytic core composed of POLR2A/RPB1, POLR2B/RPB2, POLR2C/RPB3, POLR2I/RPB9, POLR2J/RPB11, POLR2E/RPABC1, POLR2F/RPABC2, POLR2H/RPABC3, POLR2K/RPABC4 and POLR2L/RPABC5 and a mobile stalk composed of two subunits POLR2D/RPB4 and POLR2G/RPB7. Part of Pol II(G) complex, in which Pol II core associates with an additional subunit POLR2M; unlike conventional Pol II, Pol II(G) functions as a transcriptional repressor. Part of TBP-based Pol II pre-initiation complex (PIC), in which Pol II core assembles with general transcription factors and other specific initiation factors including GTF2E1, GTF2E2, GTF2F1, GTF2F2, TCEA1, ERCC2, ERCC3, GTF2H2, GTF2H3, GTF2H4, GTF2H5, GTF2A1, GTF2A2, GTF2B and TBP; this large multi-subunit PIC complex mediates DNA unwinding and targets Pol II core to the transcription start site where the first phosphodiester bond forms. Pol III complex consists of a ten-subunit catalytic core composed of POLR3A/RPC1, POLR3B/RPC2, POLR1C/RPAC1, POLR1D/RPAC2, POLR3K/RPC10, POLR2E/RPABC1, POLR2F/RPABC2, POLR2H/RPABC3, POLR2K/RPABC4 and POLR2L/RPABC5; a mobile stalk composed of two subunits POLR3H/RPC8 and CRCP/RPC9, protruding from the core and functioning primarily in transcription initiation; and additional subunits homologous to general transcription factors of the RNA polymerase II machinery, POLR3C/RPC3-POLR3F/RPC6-POLR3G/RPC7 heterotrimer required for transcription initiation and POLR3D/RPC4-POLR3E/RPC5 heterodimer involved in both transcription initiation and termination.

It localises to the nucleus. Its subcellular location is the nucleolus. Functionally, DNA-dependent RNA polymerase catalyzes the transcription of DNA into RNA using the four ribonucleoside triphosphates as substrates. Common component of RNA polymerases I, II and III which synthesize ribosomal RNA precursors, mRNA precursors and many functional non-coding RNAs, and a small RNAs, such as 5S rRNA and tRNAs, respectively. This chain is DNA-directed RNA polymerases I, II, and III subunit RPABC5 (POLR2L), found in Bos taurus (Bovine).